The sequence spans 386 residues: Short integuments 2, mitochondrial (386 aa).

The CP-type G domain occupies 37–207 (TRAIRNRLKL…VLDSPGVLVP (171 aa)). Positions 55–59 (DARIP) match the DARXP motif motif. Residues 81-84 (NKKD) are G4. Residues 81-84 (NKKD), 109-110 (NA), and 146-151 (NVGKSA) each bind GTP. Positions 109-111 (NAH) are G5. The segment at 143–150 (GVPNVGKS) is G1. The G2 stretch occupies residues 180–184 (GVTQD). The G3 stretch occupies residues 200-203 (DSPG). Gly203 lines the GTP pocket.

This sequence belongs to the TRAFAC class YlqF/YawG GTPase family. MTG1 subfamily. In terms of tissue distribution, expressed in seedlings, roots, leaves, stems, inflorescences and siliques.

The protein localises to the mitochondrion. In terms of biological role, GTPase that may function in mitochondrial ribosome assembly. Involved in a variety of growth processes during vegetative development and promotes growth and cell division in the developing integuments. This Arabidopsis thaliana (Mouse-ear cress) protein is Short integuments 2, mitochondrial.